Reading from the N-terminus, the 271-residue chain is Formamidopyrimidine-DNA glycosylase (271 aa).

Catalysis depends on Pro-2, which acts as the Schiff-base intermediate with DNA. Catalysis depends on Glu-3, which acts as the Proton donor. Catalysis depends on Lys-58, which acts as the Proton donor; for beta-elimination activity. DNA-binding residues include His-92, Arg-111, and Arg-152. The FPG-type zinc finger occupies 237 to 271; the sequence is MVYGREGEACRHCGGELKHATIGQRATVWCAACQR. Catalysis depends on Arg-261, which acts as the Proton donor; for delta-elimination activity.

The protein belongs to the FPG family. Monomer. Zn(2+) serves as cofactor.

It carries out the reaction Hydrolysis of DNA containing ring-opened 7-methylguanine residues, releasing 2,6-diamino-4-hydroxy-5-(N-methyl)formamidopyrimidine.. The enzyme catalyses 2'-deoxyribonucleotide-(2'-deoxyribose 5'-phosphate)-2'-deoxyribonucleotide-DNA = a 3'-end 2'-deoxyribonucleotide-(2,3-dehydro-2,3-deoxyribose 5'-phosphate)-DNA + a 5'-end 5'-phospho-2'-deoxyribonucleoside-DNA + H(+). In terms of biological role, involved in base excision repair of DNA damaged by oxidation or by mutagenic agents. Acts as a DNA glycosylase that recognizes and removes damaged bases. Has a preference for oxidized purines, such as 7,8-dihydro-8-oxoguanine (8-oxoG). Has AP (apurinic/apyrimidinic) lyase activity and introduces nicks in the DNA strand. Cleaves the DNA backbone by beta-delta elimination to generate a single-strand break at the site of the removed base with both 3'- and 5'-phosphates. In Xanthomonas campestris pv. campestris (strain ATCC 33913 / DSM 3586 / NCPPB 528 / LMG 568 / P 25), this protein is Formamidopyrimidine-DNA glycosylase.